The primary structure comprises 583 residues: Thiol:disulfide interchange protein DsbD (583 aa).

The first 20 residues, 1 to 20 (MLKRFIFLLVGITLTLSAHA), serve as a signal peptide directing secretion. 2 cysteine pairs are disulfide-bonded: Cys123–Cys128 and Cys200–Cys322. Transmembrane regions (helical) follow at residues 185–205 (IFWF…LPML), 237–257 (LTYT…QVAL), 261–281 (PVLI…FGLF), 302–322 (GGAF…ASPC), 344–364 (GLAL…ITLF), 375–395 (WLLK…VFLL), 405–425 (PLMW…VIPT), and 433–453 (VRIV…NLVW). Residues 440–583 (TFAVASYPWA…NQFLNWLNQL (144 aa)) enclose the Thioredoxin domain. The cysteines at positions 500 and 503 are disulfide-linked.

This sequence belongs to the thioredoxin family. DsbD subfamily.

The protein resides in the cell inner membrane. The enzyme catalyses [protein]-dithiol + NAD(+) = [protein]-disulfide + NADH + H(+). It catalyses the reaction [protein]-dithiol + NADP(+) = [protein]-disulfide + NADPH + H(+). Required to facilitate the formation of correct disulfide bonds in some periplasmic proteins and for the assembly of the periplasmic c-type cytochromes. Acts by transferring electrons from cytoplasmic thioredoxin to the periplasm. This transfer involves a cascade of disulfide bond formation and reduction steps. The protein is Thiol:disulfide interchange protein DsbD of Actinobacillus pleuropneumoniae serotype 5b (strain L20).